Consider the following 198-residue polypeptide: Putative pseudouridine methyltransferase (198 aa).

Leu132 and Cys186 together coordinate S-adenosyl-L-methionine.

Belongs to the methyltransferase superfamily. TrmY family.

The protein localises to the cytoplasm. This is Putative pseudouridine methyltransferase from Shewanella frigidimarina (strain NCIMB 400).